The sequence spans 195 residues: Glycerol-3-phosphate acyltransferase (195 aa).

4 helical membrane-spanning segments follow: residues 2–22 (INLLVIISAYFIGNFSTSFIV), 79–99 (AALMAGIAVVIGHNWPVLLGF), 111–131 (VALIASPLAAIASISLGVVIL), and 146–166 (TILPFFLFSYGLEYFIFGLVL).

Belongs to the PlsY family. As to quaternary structure, probably interacts with PlsX.

It is found in the cell membrane. It carries out the reaction an acyl phosphate + sn-glycerol 3-phosphate = a 1-acyl-sn-glycero-3-phosphate + phosphate. It participates in lipid metabolism; phospholipid metabolism. Its function is as follows. Catalyzes the transfer of an acyl group from acyl-phosphate (acyl-PO(4)) to glycerol-3-phosphate (G3P) to form lysophosphatidic acid (LPA). This enzyme utilizes acyl-phosphate as fatty acyl donor, but not acyl-CoA or acyl-ACP. This chain is Glycerol-3-phosphate acyltransferase, found in Alkaliphilus metalliredigens (strain QYMF).